Consider the following 489-residue polypeptide: UDP-N-acetylmuramoyl-L-alanyl-D-glutamate--2,6-diaminopimelate ligase (489 aa).

Residue Ser-30 coordinates UDP-N-acetyl-alpha-D-muramoyl-L-alanyl-D-glutamate. 113–119 (GTNGKTS) provides a ligand contact to ATP. UDP-N-acetyl-alpha-D-muramoyl-L-alanyl-D-glutamate contacts are provided by residues 155–156 (TT), Ser-182, Gln-188, and Arg-190. Lys-222 carries the N6-carboxylysine modification. Meso-2,6-diaminopimelate is bound by residues Arg-388, 412–415 (DNPR), Gly-463, and Glu-467. The short motif at 412–415 (DNPR) is the Meso-diaminopimelate recognition motif element.

It belongs to the MurCDEF family. MurE subfamily. It depends on Mg(2+) as a cofactor. Post-translationally, carboxylation is probably crucial for Mg(2+) binding and, consequently, for the gamma-phosphate positioning of ATP.

The protein resides in the cytoplasm. It carries out the reaction UDP-N-acetyl-alpha-D-muramoyl-L-alanyl-D-glutamate + meso-2,6-diaminopimelate + ATP = UDP-N-acetyl-alpha-D-muramoyl-L-alanyl-gamma-D-glutamyl-meso-2,6-diaminopimelate + ADP + phosphate + H(+). It functions in the pathway cell wall biogenesis; peptidoglycan biosynthesis. Catalyzes the addition of meso-diaminopimelic acid to the nucleotide precursor UDP-N-acetylmuramoyl-L-alanyl-D-glutamate (UMAG) in the biosynthesis of bacterial cell-wall peptidoglycan. In Coxiella burnetii (strain RSA 493 / Nine Mile phase I), this protein is UDP-N-acetylmuramoyl-L-alanyl-D-glutamate--2,6-diaminopimelate ligase.